The chain runs to 235 residues: DNA repair protein RecO (235 aa).

Belongs to the RecO family.

Functionally, involved in DNA repair and RecF pathway recombination. This Enterobacter sp. (strain 638) protein is DNA repair protein RecO.